The chain runs to 341 residues: THO complex subunit 6 homolog (341 aa).

7 WD repeats span residues R22 to A61, A74 to E112, L124 to A163, G166 to T205, S215 to V254, P256 to V293, and G295 to L339. Residue S180 is modified to Phosphoserine.

The protein belongs to the WD repeat THOC6 family. As to quaternary structure, component of the THO subcomplex, which is composed of THOC1, THOC2, THOC3, THOC5, THOC6 and THOC7. The THO subcomplex interacts with DDX39B to form the THO-DDX39B complex which multimerizes into a 28-subunit tetrameric assembly. Component of the transcription/export (TREX) complex at least composed of ALYREF/THOC4, DDX39B, SARNP/CIP29, CHTOP and the THO subcomplex; in the complex interacts with THOC5; together with THOC5 and THOC7, plays a key structural role in the oligomerization of the THO-DDX39B complex. TREX seems to have a dynamic structure involving ATP-dependent remodeling.

Its subcellular location is the nucleus. It is found in the nucleus speckle. Component of the THO subcomplex of the TREX complex which is thought to couple mRNA transcription, processing and nuclear export, and which specifically associates with spliced mRNA and not with unspliced pre-mRNA. Plays a key structural role in the oligomerization of the THO-DDX39B complex. TREX is recruited to spliced mRNAs by a transcription-independent mechanism, binds to mRNA upstream of the exon-junction complex (EJC) and is recruited in a splicing- and cap-dependent manner to a region near the 5' end of the mRNA where it functions in mRNA export to the cytoplasm via the TAP/NXF1 pathway. Plays a role in apoptosis negative control involved in brain development. This is THO complex subunit 6 homolog (Thoc6) from Rattus norvegicus (Rat).